We begin with the raw amino-acid sequence, 177 residues long: Large ribosomal subunit protein uL6 (177 aa).

Belongs to the universal ribosomal protein uL6 family. As to quaternary structure, part of the 50S ribosomal subunit.

In terms of biological role, this protein binds to the 23S rRNA, and is important in its secondary structure. It is located near the subunit interface in the base of the L7/L12 stalk, and near the tRNA binding site of the peptidyltransferase center. This is Large ribosomal subunit protein uL6 from Methylobacillus flagellatus (strain ATCC 51484 / DSM 6875 / VKM B-1610 / KT).